Consider the following 344-residue polypeptide: DNA-directed RNA polymerase subunit alpha (344 aa).

The interval 1-238 (MKVIKTAPLI…KQLGVFGEKP (238 aa)) is alpha N-terminal domain (alpha-NTD). Residues 253-344 (DAKDLSAKIE…EKLEDKGGND (92 aa)) form an alpha C-terminal domain (alpha-CTD) region.

It belongs to the RNA polymerase alpha chain family. In terms of assembly, homodimer. The RNAP catalytic core consists of 2 alpha, 1 beta, 1 beta' and 1 omega subunit. When a sigma factor is associated with the core the holoenzyme is formed, which can initiate transcription.

It carries out the reaction RNA(n) + a ribonucleoside 5'-triphosphate = RNA(n+1) + diphosphate. DNA-dependent RNA polymerase catalyzes the transcription of DNA into RNA using the four ribonucleoside triphosphates as substrates. The chain is DNA-directed RNA polymerase subunit alpha from Helicobacter acinonychis (strain Sheeba).